The following is a 542-amino-acid chain: 1,3-beta-glucanosyltransferase gas1 (542 aa).

The signal sequence occupies residues 1 to 19 (MKFSILSLAVAGLVGLAKA). Asn-35 carries an N-linked (GlcNAc...) asparagine glycan. Cys-70 and Cys-99 are disulfide-bonded. A (1,3-beta-D-glucosyl)n-binding site is contributed by Tyr-88. Asn-91 carries N-linked (GlcNAc...) asparagine glycosylation. 2 residues coordinate (1,3-beta-D-glucosyl)n: Asn-156 and Glu-157. The active-site Proton donor is Glu-157. N-linked (GlcNAc...) asparagine glycosylation is present at Asn-161. Residues Asp-198 and Arg-203 each coordinate (1,3-beta-D-glucosyl)n. Disulfide bonds link Cys-212–Cys-345, Cys-230–Cys-261, Cys-367–Cys-419, Cys-376–Cys-439, and Cys-395–Cys-400. Asn-249 carries an N-linked (GlcNAc...) asparagine glycan. Residue Glu-258 is the Nucleophile of the active site. N-linked (GlcNAc...) asparagine glycosylation occurs at Asn-279. Tyr-290 contacts (1,3-beta-D-glucosyl)n. N-linked (GlcNAc...) asparagine glycans are attached at residues Asn-406, Asn-484, Asn-502, and Asn-509. A disordered region spans residues 490–515 (MSTSYTSGSGSSNSSGSSSNSSSKSS). A lipid anchor (GPI-anchor amidated serine) is attached at Ser-516. Residues 517–542 (GASSYNLNMVITFLSVVIGGTAVLFI) constitute a propeptide, removed in mature form.

Belongs to the glycosyl hydrolase 72 family. Post-translationally, the GPI-anchor is attached to the protein in the endoplasmic reticulum and serves to target the protein to the cell surface. There, the glucosamine-inositol phospholipid moiety is cleaved off and the GPI-modified mannoprotein is covalently attached via its lipidless GPI glycan remnant to the 1,6-beta-glucan of the outer cell wall layer.

It localises to the secreted. The protein resides in the cell wall. Its subcellular location is the membrane. Functionally, splits internally a 1,3-beta-glucan molecule and transfers the newly generated reducing end (the donor) to the non-reducing end of another 1,3-beta-glucan molecule (the acceptor) forming a 1,3-beta linkage, resulting in the elongation of 1,3-beta-glucan chains in the cell wall. The polypeptide is 1,3-beta-glucanosyltransferase gas1 (gas1) (Schizosaccharomyces pombe (strain 972 / ATCC 24843) (Fission yeast)).